Consider the following 579-residue polypeptide: Arginine--tRNA ligase (579 aa).

The short motif at 127-137 is the 'HIGH' region element; that stretch reads PNLAKEMHVGH.

It belongs to the class-I aminoacyl-tRNA synthetase family. In terms of assembly, monomer.

The protein localises to the cytoplasm. The enzyme catalyses tRNA(Arg) + L-arginine + ATP = L-arginyl-tRNA(Arg) + AMP + diphosphate. In Stutzerimonas stutzeri (strain A1501) (Pseudomonas stutzeri), this protein is Arginine--tRNA ligase.